The following is a 105-amino-acid chain: PTS system lactose-specific EIIA component (105 aa).

Residues 4 to 102 (EEMTLLGFEI…IHHLIELYKR (99 aa)) form the PTS EIIA type-3 domain. H78 (tele-phosphohistidine intermediate) is an active-site residue. A Phosphohistidine; by HPr modification is found at H78. D81 contributes to the Mg(2+) binding site.

In terms of assembly, homotrimer. It depends on Mg(2+) as a cofactor.

It localises to the cytoplasm. Functionally, the phosphoenolpyruvate-dependent sugar phosphotransferase system (sugar PTS), a major carbohydrate active transport system, catalyzes the phosphorylation of incoming sugar substrates concomitantly with their translocation across the cell membrane. The enzyme II LacEF PTS system is involved in lactose transport. The sequence is that of PTS system lactose-specific EIIA component from Lactococcus lactis subsp. lactis (Streptococcus lactis).